Consider the following 362-residue polypeptide: Peptide chain release factor 1 (362 aa).

Gln-237 is modified (N5-methylglutamine).

The protein belongs to the prokaryotic/mitochondrial release factor family. In terms of processing, methylated by PrmC. Methylation increases the termination efficiency of RF1.

The protein resides in the cytoplasm. Functionally, peptide chain release factor 1 directs the termination of translation in response to the peptide chain termination codons UAG and UAA. In Vibrio parahaemolyticus serotype O3:K6 (strain RIMD 2210633), this protein is Peptide chain release factor 1.